The sequence spans 57 residues: uncharacterized protein (57 aa).

This is an uncharacterized protein from Thermoproteus tenax virus 1 (strain KRA1) (TTV1).